Consider the following 322-residue polypeptide: Protein-L-isoaspartate O-methyltransferase (322 aa).

Residues 1–101 (MSGERAKRFP…AKQGDRSAAP (101 aa)) form a disordered region. Positions 14–29 (EDLKREPRKPEGRVAE) are enriched in basic and acidic residues. 2 stretches are compositionally biased toward low complexity: residues 33-51 (AGDA…PAAA) and 76-91 (HAPA…PQGG). S170 is an active-site residue.

It belongs to the methyltransferase superfamily. L-isoaspartyl/D-aspartyl protein methyltransferase family.

It is found in the cytoplasm. The catalysed reaction is [protein]-L-isoaspartate + S-adenosyl-L-methionine = [protein]-L-isoaspartate alpha-methyl ester + S-adenosyl-L-homocysteine. Functionally, catalyzes the methyl esterification of L-isoaspartyl residues in peptides and proteins that result from spontaneous decomposition of normal L-aspartyl and L-asparaginyl residues. It plays a role in the repair and/or degradation of damaged proteins. The sequence is that of Protein-L-isoaspartate O-methyltransferase from Burkholderia pseudomallei (strain 1710b).